The primary structure comprises 82 residues: Turripeptide OL139 (82 aa).

A disordered region spans residues 58–82; it reads HRTTRDTADKTHGGSQRDRFFQSIA.

In terms of processing, contains 6 disulfide bonds. In terms of tissue distribution, expressed by the venom duct.

The protein resides in the secreted. Its function is as follows. Acts as a neurotoxin by inhibiting an ion channel. This is Turripeptide OL139 from Iotyrris olangoensis (Sea snail).